Reading from the N-terminus, the 382-residue chain is ATP phosphoribosyltransferase regulatory subunit (382 aa).

It belongs to the class-II aminoacyl-tRNA synthetase family. HisZ subfamily. Heteromultimer composed of HisG and HisZ subunits.

Its subcellular location is the cytoplasm. It participates in amino-acid biosynthesis; L-histidine biosynthesis; L-histidine from 5-phospho-alpha-D-ribose 1-diphosphate: step 1/9. In terms of biological role, required for the first step of histidine biosynthesis. May allow the feedback regulation of ATP phosphoribosyltransferase activity by histidine. The sequence is that of ATP phosphoribosyltransferase regulatory subunit from Acidovorax sp. (strain JS42).